A 141-amino-acid chain; its full sequence is Hemoglobin subunit alpha (141 aa).

A Globin domain is found at 1–141 (VLSPADKTNV…VSTVLTSKYR (141 aa)). Ser-3 bears the Phosphoserine mark. At Lys-7 the chain carries N6-succinyllysine. At Thr-8 the chain carries Phosphothreonine. Lys-11 carries the post-translational modification N6-succinyllysine. Lys-16 carries the N6-acetyllysine; alternate modification. Lys-16 is modified (N6-succinyllysine; alternate). Tyr-24 carries the post-translational modification Phosphotyrosine. Ser-35 is modified (phosphoserine). Lys-40 carries the post-translational modification N6-succinyllysine. His-58 lines the O2 pocket. His-87 provides a ligand contact to heme b. At Ser-102 the chain carries Phosphoserine. Thr-108 carries the phosphothreonine modification. Phosphoserine occurs at positions 124 and 131. A phosphothreonine mark is found at Thr-134 and Thr-137. Ser-138 is modified (phosphoserine).

Belongs to the globin family. As to quaternary structure, heterotetramer of two alpha chains and two beta chains. In terms of tissue distribution, red blood cells.

Involved in oxygen transport from the lung to the various peripheral tissues. In terms of biological role, hemopressin acts as an antagonist peptide of the cannabinoid receptor CNR1. Hemopressin-binding efficiently blocks cannabinoid receptor CNR1 and subsequent signaling. The polypeptide is Hemoglobin subunit alpha (HBA) (Cynopterus sphinx (Indian short-nosed fruit bat)).